The sequence spans 210 residues: Large ribosomal subunit protein uL4 (210 aa).

Positions 49–76 (HCTKTRSEVSGGGKKPWRQKHTGRARHG) are disordered. Residues 63–76 (KPWRQKHTGRARHG) show a composition bias toward basic residues.

Belongs to the universal ribosomal protein uL4 family. Part of the 50S ribosomal subunit.

Its function is as follows. One of the primary rRNA binding proteins, this protein initially binds near the 5'-end of the 23S rRNA. It is important during the early stages of 50S assembly. It makes multiple contacts with different domains of the 23S rRNA in the assembled 50S subunit and ribosome. In terms of biological role, forms part of the polypeptide exit tunnel. This is Large ribosomal subunit protein uL4 from Thermodesulfovibrio yellowstonii (strain ATCC 51303 / DSM 11347 / YP87).